A 246-amino-acid polypeptide reads, in one-letter code: Pyridoxine 5'-phosphate synthase (246 aa).

Position 7 (Asn7) interacts with 3-amino-2-oxopropyl phosphate. Residue 9–10 participates in 1-deoxy-D-xylulose 5-phosphate binding; that stretch reads DH. Arg18 contributes to the 3-amino-2-oxopropyl phosphate binding site. Catalysis depends on His43, which acts as the Proton acceptor. 1-deoxy-D-xylulose 5-phosphate-binding residues include Arg45 and His50. Glu70 functions as the Proton acceptor in the catalytic mechanism. Thr100 lines the 1-deoxy-D-xylulose 5-phosphate pocket. The active-site Proton donor is His190. 3-amino-2-oxopropyl phosphate-binding positions include Gly191 and 212 to 213; that span reads GH.

Belongs to the PNP synthase family. In terms of assembly, homooctamer; tetramer of dimers.

It is found in the cytoplasm. The catalysed reaction is 3-amino-2-oxopropyl phosphate + 1-deoxy-D-xylulose 5-phosphate = pyridoxine 5'-phosphate + phosphate + 2 H2O + H(+). It participates in cofactor biosynthesis; pyridoxine 5'-phosphate biosynthesis; pyridoxine 5'-phosphate from D-erythrose 4-phosphate: step 5/5. Its function is as follows. Catalyzes the complicated ring closure reaction between the two acyclic compounds 1-deoxy-D-xylulose-5-phosphate (DXP) and 3-amino-2-oxopropyl phosphate (1-amino-acetone-3-phosphate or AAP) to form pyridoxine 5'-phosphate (PNP) and inorganic phosphate. The chain is Pyridoxine 5'-phosphate synthase from Bordetella petrii (strain ATCC BAA-461 / DSM 12804 / CCUG 43448).